The chain runs to 288 residues: Phosphatidylserine decarboxylase proenzyme (288 aa).

Residues Asp-95, His-152, and Ser-255 each act as charge relay system; for autoendoproteolytic cleavage activity in the active site. Ser-255 acts as the Schiff-base intermediate with substrate; via pyruvic acid; for decarboxylase activity in catalysis. Residue Ser-255 is modified to Pyruvic acid (Ser); by autocatalysis.

This sequence belongs to the phosphatidylserine decarboxylase family. PSD-B subfamily. Prokaryotic type I sub-subfamily. In terms of assembly, heterodimer of a large membrane-associated beta subunit and a small pyruvoyl-containing alpha subunit. Pyruvate is required as a cofactor. Post-translationally, is synthesized initially as an inactive proenzyme. Formation of the active enzyme involves a self-maturation process in which the active site pyruvoyl group is generated from an internal serine residue via an autocatalytic post-translational modification. Two non-identical subunits are generated from the proenzyme in this reaction, and the pyruvate is formed at the N-terminus of the alpha chain, which is derived from the carboxyl end of the proenzyme. The autoendoproteolytic cleavage occurs by a canonical serine protease mechanism, in which the side chain hydroxyl group of the serine supplies its oxygen atom to form the C-terminus of the beta chain, while the remainder of the serine residue undergoes an oxidative deamination to produce ammonia and the pyruvoyl prosthetic group on the alpha chain. During this reaction, the Ser that is part of the protease active site of the proenzyme becomes the pyruvoyl prosthetic group, which constitutes an essential element of the active site of the mature decarboxylase.

The protein resides in the cell membrane. It carries out the reaction a 1,2-diacyl-sn-glycero-3-phospho-L-serine + H(+) = a 1,2-diacyl-sn-glycero-3-phosphoethanolamine + CO2. Its pathway is phospholipid metabolism; phosphatidylethanolamine biosynthesis; phosphatidylethanolamine from CDP-diacylglycerol: step 2/2. In terms of biological role, catalyzes the formation of phosphatidylethanolamine (PtdEtn) from phosphatidylserine (PtdSer). In Methylococcus capsulatus (strain ATCC 33009 / NCIMB 11132 / Bath), this protein is Phosphatidylserine decarboxylase proenzyme.